A 149-amino-acid polypeptide reads, in one-letter code: uncharacterized protein (149 aa).

This is an uncharacterized protein from Archaeoglobus fulgidus (strain ATCC 49558 / DSM 4304 / JCM 9628 / NBRC 100126 / VC-16).